We begin with the raw amino-acid sequence, 798 residues long: Cold shock domain-containing protein E1 (798 aa).

The CSD 1 domain maps to 26–87 (ETGVIEKLLT…RTGKPIAIKL (62 aa)). Lys81 bears the N6-acetyllysine mark. A Glycyl lysine isopeptide (Lys-Gly) (interchain with G-Cter in SUMO2) cross-link involves residue Lys91. Phosphoserine is present on Ser123. The region spanning 136–179 (VFYLTYTSEDVEGNVQLETGDKINFVIDNNKHTGAVSARNIMLL) is the CSD 2; truncated domain. The CSD 3 domain maps to 186–245 (YQGVVCAMKEAFGFIERGDVVKEIFFHYSEFKGDLETLQPGDDVEFTIKDRNGKEVATDV). Ser276 is modified (phosphoserine). Residues 297 to 337 (LPFGDKDTKSKVTLLEGDHVRFNISTDRRDKLERATNIEVL) form the CSD 4; truncated domain. CSD domains lie at 349–410 (EMGV…AIRI) and 447–507 (NKGK…ATCV). Ser514 carries the post-translational modification Phosphoserine. Residues 519–579 (LLGYVATLKD…KGNKVSAEKV (61 aa)) form the CSD 7 domain. Ser584 is modified (phosphoserine). 2 CSD domains span residues 610–670 (PTQI…AYNI) and 674–735 (RRAT…ACNV). In terms of domain architecture, SUZ-C spans 748-789 (PRPDRLVNRLKNITLDDASAPRLMVLRQPRGPDNSMGFGAER). A Phosphothreonine modification is found at Thr761.

Belongs to the UNR family. In terms of assembly, component of a multi subunit autoregulatory ribonucleoprotein complex (ARC), at least composed of IGF2BP1, PABPC1 and CSDE1. Interacts with STRAP. Part of a complex associated with the FOS mCRD domain and consisting of PABPC1, PAIP1, HNRPD and SYNCRIP. The interaction with PABPC1 is direct and RNA-independent. Interacts with EIF4ENIF1/4E-T.

Its subcellular location is the cytoplasm. The protein localises to the stress granule. The protein resides in the P-body. Functionally, RNA-binding protein involved in translationally coupled mRNA turnover. Implicated with other RNA-binding proteins in the cytoplasmic deadenylation/translational and decay interplay of the FOS mRNA mediated by the major coding-region determinant of instability (mCRD) domain. Required for efficient formation of stress granules. The sequence is that of Cold shock domain-containing protein E1 from Rattus norvegicus (Rat).